Consider the following 840-residue polypeptide: Lethal(3)malignant brain tumor-like protein 1 (840 aa).

Ser-117 carries the phosphoserine modification. Residues 127-269 (EYEDGGAPAG…WSSSQPATGE (143 aa)) form a disordered region. A compositionally biased stretch (acidic residues) spans 156–165 (PNQDPPEDDS). Over residues 200 to 210 (VENSSGSTSAS) the composition is skewed to polar residues. A compositionally biased stretch (basic and acidic residues) spans 236–247 (AMEKQEEGKDPE). Polar residues predominate over residues 250–266 (PTASTPESEEWSSSQPA). MBT repeat units lie at residues 274-374 (WSWE…LQPP), 382-481 (FSWS…LTPP), and 490-585 (FCWE…LQPP). The interval 447–454 (FDNWDDTY) is interaction with monomethylated and dimethylated peptides. The tract at residues 580-605 (HPLQPPLGPREPSSASPGGCPPLSYR) is disordered. The segment at 613–656 (SKYSFHHRKCPTPGCDGSGHVTGKFTAHHCLSGCPLAERNQSRL) adopts a CCHHC-type zinc-finger fold. Zn(2+) contacts are provided by Cys-622, Cys-627, His-640, and Cys-646. The disordered stretch occupies residues 657 to 697 (KAELSDSEASARKKNLSGFSPRKKPRHHGRIGRPPKYRKIP). Over residues 677–695 (PRKKPRHHGRIGRPPKYRK) the composition is skewed to basic residues.

Homodimer. Interacts with RB1/RB (when monomethylated at 'Lys-860'). Interacts with p53/TP53 (when monomethylated at 'Lys-382'). Interacts with CBX3, ETV6, KMT5A and VCP/p97. In terms of processing, ubiquitinated in a VCP/p97-dependent way following DNA damage, leading to its removal from DNA damage sites, promoting accessibility of H4K20me2 mark for DNA repair protein TP53BP1, which is then recruited to DNA damage sites. As to expression, widely expressed. Expression is reduced in colorectal cancer cell line SW480 and promyelocytic leukemia cell line HL-60.

It localises to the nucleus. In terms of biological role, polycomb group (PcG) protein that specifically recognizes and binds mono- and dimethyllysine residues on target proteins, thereby acting as a 'reader' of a network of post-translational modifications. PcG proteins maintain the transcriptionally repressive state of genes: acts as a chromatin compaction factor by recognizing and binding mono- and dimethylated histone H1b/H1-4 at 'Lys-26' (H1bK26me1 and H1bK26me2) and histone H4 at 'Lys-20' (H4K20me1 and H4K20me2), leading to condense chromatin and repress transcription. Recognizes and binds p53/TP53 monomethylated at 'Lys-382', leading to repress p53/TP53-target genes. Also recognizes and binds RB1/RB monomethylated at 'Lys-860'. Participates in the ETV6-mediated repression. Probably plays a role in cell proliferation. Overexpression induces multinucleated cells, suggesting that it is required to accomplish normal mitosis. This is Lethal(3)malignant brain tumor-like protein 1 (L3MBTL1) from Homo sapiens (Human).